Consider the following 703-residue polypeptide: Fibulin-1 (703 aa).

Positions 1–29 are cleaved as a signal peptide; it reads MERAAPSRRVPLPLLLLGGLALLAAGVDA. 35 disulfides stabilise this stretch: Cys36/Cys61, Cys37/Cys68, Cys50/Cys69, Cys78/Cys109, Cys91/Cys110, Cys112/Cys136, Cys113/Cys143, Cys126/Cys144, Cys180/Cys190, Cys186/Cys199, Cys201/Cys214, Cys220/Cys233, Cys227/Cys242, Cys248/Cys260, Cys266/Cys279, Cys273/Cys288, Cys294/Cys306, Cys312/Cys325, Cys319/Cys334, Cys341/Cys354, Cys360/Cys373, Cys367/Cys382, Cys384/Cys397, Cys403/Cys415, Cys411/Cys424, Cys426/Cys439, Cys445/Cys454, Cys450/Cys463, Cys465/Cys479, Cys485/Cys498, Cys494/Cys507, Cys509/Cys523, Cys529/Cys542, Cys536/Cys551, and Cys556/Cys577. Anaphylatoxin-like domains are found at residues 36–76, 77–111, and 112–144; these read CCAD…LEEL, HCATGISLANEQDRCATPHGDNASLEATFVKRCCH, and CCLLGRAAQAQGQSCEYSLMVGYQCGQVFQACC. Asn98 is a glycosylation site (N-linked (GlcNAc...) (complex) asparagine). Positions 176–215 constitute an EGF-like 1 domain; it reads LNDRCRGGGPCKQQCRDTGDEVVCSCFVGYQLLSDGVSCE. The 46-residue stretch at 216-261 folds into the EGF-like 2; calcium-binding domain; it reads DVNECITGSHSCRLGESCINTVGSFRCQRDSSCGTGYELTEDNSCK. Positions 262-307 constitute an EGF-like 3; calcium-binding domain; the sequence is DIDECESGIHNCLPDFICQNTLGSFRCRPKLQCKSGFIQDALGNCI. An EGF-like 4; calcium-binding domain is found at 308–355; it reads DINECLSISAPCPIGHTCINTEGSYTCQKNVPNCGRGYHLNEEGTRCV. The 43-residue stretch at 356 to 398 folds into the EGF-like 5; calcium-binding domain; that stretch reads DVDECAPPAEPCGKGHRCVNSPGSFRCECKTGYYFDGISRMCV. The segment at 356–440 is self-association and FN1-binding; calcium is necessary for homotypic binding, but not for heterotypic binding; that stretch reads DVDECAPPAE…RLSVDGRSCE (85 aa). The EGF-like 6; calcium-binding domain occupies 399 to 440; it reads DVNECQRYPGRLCGHKCENTLGSYLCSCSVGFRLSVDGRSCE. In terms of domain architecture, EGF-like 7; calcium-binding spans 441–480; the sequence is DINECSSSPCSQECANVYGSYQCYCRRGYQLSDVDGVTCE. The EGF-like 8; calcium-binding domain occupies 481–524; it reads DIDECALPTGGHICSYRCINIPGSFQCSCPSSGYRLAPNGRNCQ. Positions 525 to 578 constitute an EGF-like 9; calcium-binding domain; that stretch reads DIDECVTGIHNCSINETCFNIQGGFRCLAFECPENYRRSAATLQQEKTDTVRCI. Residues Asn535 and Asn539 are each glycosylated (N-linked (GlcNAc...) asparagine).

Belongs to the fibulin family. Homomultimerizes and interacts with various extracellular matrix components such as FN1, LAMA1, LAMA2, NID, ACAN, CSPG2 and type IV collagen. Also interacts with APP and FGB. Interacts with FBLN7. Interacts with CCN3. In terms of assembly, (Microbial infection) Interacts with human papillomavirus/HPV type 16, 18 and 31 proteins E6. Isoform A and isoform B are only expressed in placenta. Isoform C and isoform D are expressed in a variety of tissues and cultured cells.

The protein localises to the secreted. It localises to the extracellular space. It is found in the extracellular matrix. Its function is as follows. Incorporated into fibronectin-containing matrix fibers. May play a role in cell adhesion and migration along protein fibers within the extracellular matrix (ECM). Could be important for certain developmental processes and contribute to the supramolecular organization of ECM architecture, in particular to those of basement membranes. Has been implicated in a role in cellular transformation and tumor invasion, it appears to be a tumor suppressor. May play a role in haemostasis and thrombosis owing to its ability to bind fibrinogen and incorporate into clots. Could play a significant role in modulating the neurotrophic activities of APP, particularly soluble APP. This is Fibulin-1 (FBLN1) from Homo sapiens (Human).